Reading from the N-terminus, the 351-residue chain is Tropomodulin-2 (351 aa).

Phosphoserine is present on serine 25.

It belongs to the tropomodulin family. As to quaternary structure, binds to the N-terminus of tropomyosin and to actin. Neuronal-tissue specific.

The protein localises to the cytoplasm. It is found in the cytoskeleton. Blocks the elongation and depolymerization of the actin filaments at the pointed end. The Tmod/TM complex contributes to the formation of the short actin protofilament, which in turn defines the geometry of the membrane skeleton. This Homo sapiens (Human) protein is Tropomodulin-2 (TMOD2).